Reading from the N-terminus, the 467-residue chain is Glutamine synthetase (467 aa).

In terms of domain architecture, GS beta-grasp spans 14 to 98 (EEVEYVDIRF…VHCNVVEPDT (85 aa)). Positions 106–467 (PRGAAVKAEA…PVEYQMYYSC (362 aa)) constitute a GS catalytic domain. Residues E131 and E133 each coordinate Mg(2+). D209 is an ATP binding site. Mg(2+) is bound by residues E214 and E221. Residues 265 to 266 (NG) and G266 each bind L-glutamate. H270 serves as a coordination point for Mg(2+). Residues 272–274 (NMS) and S274 each bind ATP. Residues R320, E326, and R338 each contribute to the L-glutamate site. ATP contacts are provided by R338 and R343. A Mg(2+)-binding site is contributed by E356. R358 provides a ligand contact to L-glutamate. Y396 carries the post-translational modification O-AMP-tyrosine.

This sequence belongs to the glutamine synthetase family. In terms of assembly, oligomer of 12 subunits arranged in the form of two hexameric ring. Mg(2+) serves as cofactor.

It localises to the cytoplasm. It carries out the reaction L-glutamate + NH4(+) + ATP = L-glutamine + ADP + phosphate + H(+). Its activity is regulated as follows. The activity of this enzyme could be controlled by adenylation under conditions of abundant glutamine. Functionally, catalyzes the ATP-dependent biosynthesis of glutamine from glutamate and ammonia. The protein is Glutamine synthetase of Cereibacter sphaeroides (Rhodobacter sphaeroides).